A 95-amino-acid polypeptide reads, in one-letter code: High mobility group nucleosome-binding domain-containing protein 3 (95 aa).

Basic and acidic residues-rich tracts occupy residues 1 to 25, 39 to 53, and 62 to 72; these read MPKR…EPTR, PEPK…KEPG, and GKKEEKQEAGK. The segment at 1–95 is disordered; that stretch reads MPKRKSPENA…EEVLSTNASH (95 aa). The residue at position 6 (S6) is a Phosphoserine. S78 carries the post-translational modification Phosphoserine.

Belongs to the HMGN family. In terms of assembly, interacts with the ligand binding domain of the thyroid receptor (TR) (in vitro). Requires the presence of thyroid hormone for its interaction. Interacts with transcriptional regulator SEHBP. Interacts with nucleosomes.

It is found in the nucleus. Functionally, binds to nucleosomes, regulating chromatin structure and consequently, chromatin-dependent processes such as transcription, DNA replication and DNA repair. Affects both insulin and glucagon levels and modulates the expression of pancreatic genes involved in insulin secretion. Regulates the expression of the glucose transporter SLC2A2 by binding specifically to its promoter region and recruiting PDX1 and additional transcription factors. Regulates the expression of SLC6A9, a glycine transporter which regulates the glycine concentration in synaptic junctions in the central nervous system, by binding to its transcription start site. May play a role in ocular development and astrocyte function. In Rattus norvegicus (Rat), this protein is High mobility group nucleosome-binding domain-containing protein 3 (Hmgn3).